The chain runs to 479 residues: Aspartyl/glutamyl-tRNA(Asn/Gln) amidotransferase subunit B (479 aa).

It belongs to the GatB/GatE family. GatB subfamily. Heterotrimer of A, B and C subunits.

The catalysed reaction is L-glutamyl-tRNA(Gln) + L-glutamine + ATP + H2O = L-glutaminyl-tRNA(Gln) + L-glutamate + ADP + phosphate + H(+). It carries out the reaction L-aspartyl-tRNA(Asn) + L-glutamine + ATP + H2O = L-asparaginyl-tRNA(Asn) + L-glutamate + ADP + phosphate + 2 H(+). Its function is as follows. Allows the formation of correctly charged Asn-tRNA(Asn) or Gln-tRNA(Gln) through the transamidation of misacylated Asp-tRNA(Asn) or Glu-tRNA(Gln) in organisms which lack either or both of asparaginyl-tRNA or glutaminyl-tRNA synthetases. The reaction takes place in the presence of glutamine and ATP through an activated phospho-Asp-tRNA(Asn) or phospho-Glu-tRNA(Gln). This Alcanivorax borkumensis (strain ATCC 700651 / DSM 11573 / NCIMB 13689 / SK2) protein is Aspartyl/glutamyl-tRNA(Asn/Gln) amidotransferase subunit B.